Here is a 345-residue protein sequence, read N- to C-terminus: NADH-ubiquinone oxidoreductase chain 2 (345 aa).

A run of 9 helical transmembrane segments spans residues 25 to 45 (HWLL…PLMT), 60 to 80 (FLTQ…NAWL), 99 to 119 (TIAI…PEVL), 149 to 171 (LNTP…GGLN), 178 to 198 (ILAF…PFSP), 199 to 219 (QLMI…FLVL), 242 to 262 (ALSL…GFVP), 282 to 302 (LALS…IVTL), and 324 to 344 (LLLS…PLTL).

The protein belongs to the complex I subunit 2 family. In terms of assembly, core subunit of respiratory chain NADH dehydrogenase (Complex I) which is composed of 45 different subunits.

The protein localises to the mitochondrion inner membrane. It carries out the reaction a ubiquinone + NADH + 5 H(+)(in) = a ubiquinol + NAD(+) + 4 H(+)(out). Its function is as follows. Core subunit of the mitochondrial membrane respiratory chain NADH dehydrogenase (Complex I) which catalyzes electron transfer from NADH through the respiratory chain, using ubiquinone as an electron acceptor. Essential for the catalytic activity and assembly of complex I. This is NADH-ubiquinone oxidoreductase chain 2 (mt-nd2) from Xenopus laevis (African clawed frog).